The primary structure comprises 360 residues: Putative transcription factor A494R (360 aa).

A zinc finger lies at 153-175 (CTCGGQMELWVNSTQSDLVCNEC).

Belongs to the nucleo-cytoplasmic large DNA viruses (NCLDVs) VLTF-3 family.

Its function is as follows. Putative transcription factor. This is Putative transcription factor A494R from Paramecium bursaria Chlorella virus 1 (PBCV-1).